A 505-amino-acid chain; its full sequence is ATP synthase subunit beta (505 aa).

The tract at residues 1 to 25 (MAKAATPKETAAVKKPAAPKKAATA) is disordered. 183–190 (GGAGVGKT) lines the ATP pocket.

The protein belongs to the ATPase alpha/beta chains family. As to quaternary structure, F-type ATPases have 2 components, CF(1) - the catalytic core - and CF(0) - the membrane proton channel. CF(1) has five subunits: alpha(3), beta(3), gamma(1), delta(1), epsilon(1). CF(0) has three main subunits: a(1), b(2) and c(9-12). The alpha and beta chains form an alternating ring which encloses part of the gamma chain. CF(1) is attached to CF(0) by a central stalk formed by the gamma and epsilon chains, while a peripheral stalk is formed by the delta and b chains.

The protein resides in the cell inner membrane. The catalysed reaction is ATP + H2O + 4 H(+)(in) = ADP + phosphate + 5 H(+)(out). In terms of biological role, produces ATP from ADP in the presence of a proton gradient across the membrane. The catalytic sites are hosted primarily by the beta subunits. In Sinorhizobium fredii (strain NBRC 101917 / NGR234), this protein is ATP synthase subunit beta.